A 1001-amino-acid polypeptide reads, in one-letter code: 26S proteasome non-ATPase regulatory subunit 1 homolog B (1001 aa).

Position 2 is an N-acetylalanine (Ala2). A Glycyl lysine isopeptide (Lys-Gly) (interchain with G-Cter in ubiquitin) cross-link involves residue Lys166. 10 PC repeats span residues 412 to 447 (SATAGLGVIHRGHLQQGRSLMAPYLPQGGAGGGGSP), 452 to 485 (GALYALGLIHANHGEGIKQFLRDSLRSTSVEVIQ), 487 to 521 (GACLGLGLAALGTADEDIYDDIKSVLYTDSAVAGE), 522 to 555 (AAGISMGLLLVGTATDKASEMLAYAHETQHEKII), 557 to 590 (GLALGIALTVYGREEGADTLIEQMTRDQDPIIRY), 591 to 626 (GGMYALALAYSGTANNKAIRQLLHFAVSDVSDDVRR), 627 to 659 (TAVLALGFVLYSDPEQTPRIVSLLSESYNPHVR), 661 to 695 (GAALAVGISCAGTGLSEAISLLEPLTSDVVDFVRQ), 696 to 736 (GALI…DTMS), and 739 to 771 (GAILASGILDAGGRNVTIRLLSKTKHDKVTAVI). 2 disordered regions span residues 853–896 (AKKE…TVEK) and 954–1001 (SLTD…YASP). The span at 854-863 (KKEAEQKAKA) shows a compositional bias: basic and acidic residues. Ser889 carries the phosphoserine modification. Residues 961-985 (STASPAVGAEAAGQAQQAATTSAMA) show a composition bias toward low complexity.

The protein belongs to the proteasome subunit S1 family. In terms of assembly, component of the 19S regulatory particle (RP/PA700) base subcomplex of the 26S proteasome. The 26S proteasome is composed of a core protease (CP), known as the 20S proteasome, capped at one or both ends by the 19S regulatory particle (RP/PA700). The RP/PA700 complex is composed of at least 17 different subunits in two subcomplexes, the base and the lid, which form the portions proximal and distal to the 20S proteolytic core, respectively.

In terms of biological role, acts as a regulatory subunit of the 26 proteasome which is involved in the ATP-dependent degradation of ubiquitinated proteins. The sequence is that of 26S proteasome non-ATPase regulatory subunit 1 homolog B (RPN2B) from Arabidopsis thaliana (Mouse-ear cress).